The chain runs to 217 residues: Membrane-associated progesterone receptor component 2 (217 aa).

S15 carries O-linked (Xyl...) (chondroitin sulfate) serine glycosylation. Residues 40–62 (ALLATGGEMLLNVALVALVLLGA) traverse the membrane as a helical segment. S84, S98, and S202 each carry phosphoserine. One can recognise a Cytochrome b5 heme-binding domain in the interval 96–195 (DFSLEQLRQY…EKYDYVGRLL (100 aa)). Positions 196-217 (KPGEEPSEYTDEEDTKDHSKQD) are disordered. Positions 200-209 (EPSEYTDEED) are enriched in acidic residues. Position 204 is a phosphotyrosine (Y204). At T205 the chain carries Phosphothreonine.

It belongs to the cytochrome b5 family. MAPR subfamily. Interacts with PGRMC1. Interacts with AAAS. Expressed in brown adipose tissue, white adipose tissue, liver, heart, skeletal muscle, brain and adrenal gland.

It is found in the membrane. It localises to the nucleus envelope. The protein localises to the endoplasmic reticulum. The protein resides in the secreted. Functionally, required for the maintenance of uterine histoarchitecture and normal female reproductive lifespan. May serve as a universal non-classical progesterone receptor in the uterus. Intracellular heme chaperone required for delivery of labile, or signaling heme, to the nucleus. Plays a role in adipocyte function and systemic glucose homeostasis. In brown fat, which has a high demand for heme, delivery of labile heme in the nucleus regulates the activity of heme-responsive transcriptional repressors such as NR1D1 and BACH1. The polypeptide is Membrane-associated progesterone receptor component 2 (Mus musculus (Mouse)).